Consider the following 185-residue polypeptide: Tetratricopeptide repeat protein 36 homolog (185 aa).

3 TPR repeats span residues 53-86 (SREL…AQRA), 88-119 (VLNN…ANDQ), and 125-158 (CHAH…GSKF).

This sequence belongs to the TTC36 family.

This chain is Tetratricopeptide repeat protein 36 homolog, found in Drosophila melanogaster (Fruit fly).